We begin with the raw amino-acid sequence, 101 residues long: Small ribosomal subunit protein uS14 (101 aa).

The protein belongs to the universal ribosomal protein uS14 family. In terms of assembly, part of the 30S ribosomal subunit. Contacts proteins S3 and S10.

Binds 16S rRNA, required for the assembly of 30S particles and may also be responsible for determining the conformation of the 16S rRNA at the A site. The chain is Small ribosomal subunit protein uS14 from Xylella fastidiosa (strain 9a5c).